Here is a 502-residue protein sequence, read N- to C-terminus: ATP synthase subunit alpha (502 aa).

The tract at residues 115 to 139 (VDGLGPVETTETRPIESPAPGVMDR) is disordered. 169-176 (GDRQTGKT) contacts ATP.

This sequence belongs to the ATPase alpha/beta chains family. F-type ATPases have 2 components, CF(1) - the catalytic core - and CF(0) - the membrane proton channel. CF(1) has five subunits: alpha(3), beta(3), gamma(1), delta(1), epsilon(1). CF(0) has three main subunits: a(1), b(2) and c(9-12). The alpha and beta chains form an alternating ring which encloses part of the gamma chain. CF(1) is attached to CF(0) by a central stalk formed by the gamma and epsilon chains, while a peripheral stalk is formed by the delta and b chains.

It localises to the cell membrane. It catalyses the reaction ATP + H2O + 4 H(+)(in) = ADP + phosphate + 5 H(+)(out). Its function is as follows. Produces ATP from ADP in the presence of a proton gradient across the membrane. The alpha chain is a regulatory subunit. This chain is ATP synthase subunit alpha, found in Geobacillus thermodenitrificans (strain NG80-2).